The following is a 139-amino-acid chain: Large ribosomal subunit protein bL20 (139 aa).

This sequence belongs to the bacterial ribosomal protein bL20 family.

Binds directly to 23S ribosomal RNA and is necessary for the in vitro assembly process of the 50S ribosomal subunit. It is not involved in the protein synthesizing functions of that subunit. The chain is Large ribosomal subunit protein bL20 from Leuconostoc citreum (strain KM20).